The primary structure comprises 166 residues: SUMO-conjugating enzyme UBC9 (166 aa).

Residues 4-157 (IAAGRLAEER…VKKEAVKYAA (154 aa)) form the UBC core domain. The Glycyl thioester intermediate role is filled by C93.

This sequence belongs to the ubiquitin-conjugating enzyme family. Interacts with brd-1 and rad-51. Interacts with smo-1 and sop-2. Interacts with bet-1 (via BROMO domain 2). Interacts with isoforms 1 and 2 of X-box-binding protein xbp-1.

The protein resides in the nucleus envelope. It functions in the pathway protein modification; protein sumoylation. In terms of biological role, accepts the ubiquitin-like protein smo-1 from the aos-1-uba-2 E1 complex and catalyzes its covalent attachment to other proteins with the help of an E3 ligase such as gei-17. Required to sumoylate the ETS transcription factor lin-1, Polycomb protein sop-2, and intermediate filament proteins, such as ifb-1. Required for embryonic development, fertility, vulval morphogenesis, inhibition of vulval cell fates, lifespan, and neuromuscular activity. This Caenorhabditis elegans protein is SUMO-conjugating enzyme UBC9.